The chain runs to 946 residues: Probable leucine-rich repeat receptor-like protein kinase At5g49770 (946 aa).

An N-terminal signal peptide occupies residues 1–25 (MKMSSRIGLFKLLILLFFQIYSVYA). Residues 26 to 561 (FTDGSDFTAL…LEDSKTVSMK (536 aa)) are Extracellular-facing. 14 LRR repeats span residues 67-91 (DNRVVSISLTNRNLKGKLPTEISTL), 92-116 (SELQTLDLTGNPELSGPLPANIGNL), 118-140 (KLTFLSLMGCAFNGPIPDSIGNL), 141-164 (EQLTRLSLNLNKFSGTIPASMGRL), 166-191 (KLYWFDIADNQLEGKLPVSDGASLPG), 195-219 (LLQTGHFHFGNNKLSGEIPEKLFSS), 221-244 (MTLLHVLFDGNQFTGSIPESLGLV), 245-268 (QNLTVLRLDRNRLSGDIPSSLNNL), 269-293 (TNLQELHLSDNKFTGSLPNLTSLTS), 295-314 (YTLDVSNNPLALSPVPSWIP), 316-340 (LNSLSTLRLEDIQLDGPVPTSLFSP), 342-365 (QLQTVSLKHNLINTTLDLGTNYSK), 367-387 (LDFVDLRDNFITGYKSPANNP), and 389-407 (NVMLADNQVCQDPANQLSG). 3 N-linked (GlcNAc...) asparagine glycosylation sites follow: N246, N267, and N287. Residues N354 and N362 are each glycosylated (N-linked (GlcNAc...) asparagine). N-linked (GlcNAc...) asparagine glycans are attached at residues N415, N460, N489, and N514. Residues 562–582 (VIIGVVVGVVVLLLLLALAGI) form a helical membrane-spanning segment. Over 583-946 (YALRQKKRAQ…YTGVFPTPKP (364 aa)) the chain is Cytoplasmic. In terms of domain architecture, Protein kinase spans 634 to 908 (FSDANDVGGG…EVVQELESIL (275 aa)). ATP contacts are provided by residues 640–648 (VGGGGYGQV) and K662. D758 functions as the Proton acceptor in the catalytic mechanism. The interval 919-946 (SATYEEASGDPYGRDSFEYTGVFPTPKP) is disordered.

This sequence belongs to the protein kinase superfamily. Ser/Thr protein kinase family.

It is found in the membrane. It catalyses the reaction L-seryl-[protein] + ATP = O-phospho-L-seryl-[protein] + ADP + H(+). The catalysed reaction is L-threonyl-[protein] + ATP = O-phospho-L-threonyl-[protein] + ADP + H(+). The polypeptide is Probable leucine-rich repeat receptor-like protein kinase At5g49770 (Arabidopsis thaliana (Mouse-ear cress)).